The primary structure comprises 529 residues: GTPase Obg (529 aa).

In terms of domain architecture, Obg spans 2 to 159; sequence PTFVDRVVLH…LDAVLELKTV (158 aa). The disordered stretch occupies residues 62–86; sequence FHPHQRASRGRPGQGSNRHGADGAD. The OBG-type G domain maps to 160-332; that stretch reads ADVALVGFPS…LSLALADLVA (173 aa). Residues 166 to 173, 191 to 195, 213 to 216, 284 to 287, and 313 to 315 contribute to the GTP site; these read GFPSAGKS, FTTLV, DVPG, NKID, and STA. Mg(2+)-binding residues include Ser173 and Thr193. The OCT domain maps to 350-427; that stretch reads PRAVNEPDFT…IGEVTFDWEP (78 aa). Disordered regions lie at residues 434 to 494 and 506 to 529; these read LGNG…DRLR and ARRA…EEEG. Composition is skewed to low complexity over residues 461–472 and 508–520; these read AGTAASGAAPSP and RAAA…VRGE.

The protein belongs to the TRAFAC class OBG-HflX-like GTPase superfamily. OBG GTPase family. Monomer. Requires Mg(2+) as cofactor.

It is found in the cytoplasm. Functionally, an essential GTPase which binds GTP, GDP and possibly (p)ppGpp with moderate affinity, with high nucleotide exchange rates and a fairly low GTP hydrolysis rate. Plays a role in control of the cell cycle, stress response, ribosome biogenesis and in those bacteria that undergo differentiation, in morphogenesis control. In Frankia casuarinae (strain DSM 45818 / CECT 9043 / HFP020203 / CcI3), this protein is GTPase Obg.